A 369-amino-acid chain; its full sequence is tRNA pseudouridine synthase D (369 aa).

Residue Asp80 is the Nucleophile of the active site. A TRUD domain is found at 156–318; it reads GIPNWFGEQR…LKQERRALRL (163 aa).

This sequence belongs to the pseudouridine synthase TruD family.

It carries out the reaction uridine(13) in tRNA = pseudouridine(13) in tRNA. Responsible for synthesis of pseudouridine from uracil-13 in transfer RNAs. The sequence is that of tRNA pseudouridine synthase D from Xanthomonas euvesicatoria pv. vesicatoria (strain 85-10) (Xanthomonas campestris pv. vesicatoria).